The sequence spans 573 residues: Ascochitine biosynthesis cluster transcriptional regulator (573 aa).

The protein resides in the nucleus. Its function is as follows. Transcription factor that regulates the expression of the gene cluster that mediates the biosynthesis of the mycotoxin ascochitine, an o-quinone methide that plays a possible protective role against other microbial competitors in nature and is considered to be important for pathogenicity of legume-associated Didymella species. The chain is Ascochitine biosynthesis cluster transcriptional regulator from Didymella fabae (Leaf and pod spot disease fungus).